Reading from the N-terminus, the 443-residue chain is Xaa-Pro dipeptidase (443 aa).

Mn(2+) is bound by residues D246, D257, H339, E384, and E423.

It belongs to the peptidase M24B family. Bacterial-type prolidase subfamily. Mn(2+) serves as cofactor.

It carries out the reaction Xaa-L-Pro dipeptide + H2O = an L-alpha-amino acid + L-proline. Its function is as follows. Splits dipeptides with a prolyl residue in the C-terminal position. This Escherichia coli (strain SMS-3-5 / SECEC) protein is Xaa-Pro dipeptidase.